Consider the following 1097-residue polypeptide: FHIP family protein GK23746 (1097 aa).

Over residues 1 to 21 (MSWLRSSPLRQSLTRTTSSGN) the composition is skewed to polar residues. Positions 1–25 (MSWLRSSPLRQSLTRTTSSGNGIRP) are disordered. Serine 491 carries the post-translational modification Phosphoserine. 3 disordered regions span residues 639–684 (DVSA…SGRR), 820–856 (NENS…RSAY), and 932–1042 (NNQQ…SEPV). Residues 641–654 (SASSGNGTGSVVVG) show a composition bias toward low complexity. Serine 823 is modified (phosphoserine). Low complexity-rich tracts occupy residues 824–852 (PLHQ…GAQQ) and 932–948 (NNQQ…SSSS). Residues 949–962 (AVTTCETSLSTQPH) show a composition bias toward polar residues. Residues 973–985 (TTSSTISTSSGTT) are compositionally biased toward low complexity. Residues 986 to 995 (AGSGGGGGSG) show a composition bias toward gly residues. 2 stretches are compositionally biased toward low complexity: residues 996 to 1006 (SNSSFSIGGST) and 1013 to 1022 (SNNTTNSSST).

It belongs to the FHIP family.

In Drosophila willistoni (Fruit fly), this protein is FHIP family protein GK23746.